The sequence spans 408 residues: Zinc finger protein 764 (408 aa).

The 72-residue stretch at 26-97 (VSFADVAVYF…AAQDPEVAKC (72 aa)) folds into the KRAB domain. The interval 91-167 (DPEVAKCQTQ…GRPSLCAHPP (77 aa)) is disordered. C2H2-type zinc fingers lie at residues 175 to 197 (HGCY…VYSH), 203 to 225 (FHCT…RAIH), 231 to 253 (HRCL…LRVH), 259 to 281 (YGCA…RRVH), 287 to 309 (FPCP…VRTH), 315 to 337 (YPCP…RRTH), and 343 to 365 (YPCP…QWVH).

Belongs to the krueppel C2H2-type zinc-finger protein family. In terms of assembly, interacts (via KRAB domain) with NR3C1/GR (via NR LBD domain); the interaction regulates transcription factor activity of NR3C1 by directing its actions toward certain biologic pathways.

The protein localises to the nucleus. Its function is as follows. Zinc finger protein that functions as a cofactor for steroid hormone receptors, such as NR3C1/GR. Directs NR3C1/GR transcriptional activity toward specific biologic pathways by changing NR3C1/GR binding and transcriptional activity on the glucocorticoid-responsive genes. The protein is Zinc finger protein 764 of Homo sapiens (Human).